A 625-amino-acid chain; its full sequence is Probable potassium transport system protein Kup (625 aa).

The next 12 membrane-spanning stretches (helical) occupy residues 13 to 33, 53 to 73, 103 to 123, 141 to 161, 172 to 192, 206 to 226, 250 to 270, 282 to 302, 340 to 360, 369 to 389, 400 to 420, and 422 to 442; these read TALAALGVVFGDIGTSPLYAL, ILSIIFWCLMLIISIKYVAIV, IYMIAIGFIGASLFFGDGIIT, VFDPFIMPIAIAIIVTLFLVQ, FGPITLVWFLSLGILGIHSVI, AIQFIYHHPIMTFFVMGAVVL, WFFVVLPCLVLNYAGQGALLL, LLVPQWALYPMIIMATMATVI, IYVPFLNWLLLIAIIILILIF, AYGLAVTLTMLCDTILVAVFI, VLILIIPFFILESVLVGATSL, and ILSGGWVPLLIGAIAVTILMT.

Belongs to the HAK/KUP transporter (TC 2.A.72) family.

The protein resides in the cell inner membrane. It carries out the reaction K(+)(in) + H(+)(in) = K(+)(out) + H(+)(out). In terms of biological role, transport of potassium into the cell. Likely operates as a K(+):H(+) symporter. This is Probable potassium transport system protein Kup from Acinetobacter baumannii (strain SDF).